A 354-amino-acid polypeptide reads, in one-letter code: Guanine nucleotide-binding protein G(i) subunit alpha-1 (354 aa).

G2 carries the N-myristoyl glycine lipid modification. Residue C3 is the site of S-palmitoyl cysteine attachment. In terms of domain architecture, G-alpha spans 32–354; the sequence is REVKLLLLGA…KNNLKDCGLF (323 aa). Positions 35-48 are G1 motif; the sequence is KLLLLGAGESGKST. GTP is bound by residues 43 to 48, 150 to 151, and 175 to 178; these read ESGKST, DS, and LRTR. S47 serves as a coordination point for Mg(2+). The tract at residues 173–181 is G2 motif; the sequence is DVLRTRVKT. T181 lines the Mg(2+) pocket. Residues 196–205 are G3 motif; it reads FKMFDVGGQR. GTP is bound by residues 200–204, 269–272, and A326; these read DVGGQ and NKKD. The interval 265–272 is G4 motif; the sequence is ILFLNKKD. The segment at 324-329 is G5 motif; it reads TCATDT.

It belongs to the G-alpha family. G(i/o/t/z) subfamily. Heterotrimeric G proteins are composed of 3 units; alpha, beta and gamma. The alpha chain contains the guanine nucleotide binding site. Part of a spindle orientation complex. Identified in complex with the beta subunit GNB1 and the gamma subunit GNG1. Identified in complex with the beta subunit GNB1 and the gamma subunit GNG2. GTP binding causes dissociation of the heterotrimer, liberating the individual subunits so that they can interact with downstream effector proteins. Post-translationally, myristoylation at Gly-2 is required for membrane anchoring before palmitoylation. Palmitoylation at Cys-3 varies with membrane lipid composition.

Its subcellular location is the nucleus. It localises to the cytoplasm. It is found in the cell membrane. The protein resides in the cytoskeleton. The protein localises to the microtubule organizing center. Its subcellular location is the centrosome. It localises to the cell cortex. It is found in the membrane. It carries out the reaction GTP + H2O = GDP + phosphate + H(+). In terms of biological role, guanine nucleotide-binding proteins (G proteins) function as transducers downstream of G protein-coupled receptors (GPCRs) in numerous signaling cascades. The alpha chain contains the guanine nucleotide binding site and alternates between an active, GTP-bound state and an inactive, GDP-bound state. Signaling by an activated GPCR promotes GDP release and GTP binding. The alpha subunit has a low GTPase activity that converts bound GTP to GDP, thereby terminating the signal. Both GDP release and GTP hydrolysis are modulated by numerous regulatory proteins. Signaling is mediated via effector proteins, such as adenylate cyclase. Inhibits adenylate cyclase activity, leading to decreased intracellular cAMP levels. Required for cortical dynein-dynactin complex recruitment during metaphase. The protein is Guanine nucleotide-binding protein G(i) subunit alpha-1 (gnai1) of Xenopus laevis (African clawed frog).